We begin with the raw amino-acid sequence, 570 residues long: Sulfite reductase [NADPH] hemoprotein beta-component (570 aa).

The [4Fe-4S] cluster site is built by Cys434, Cys440, Cys479, and Cys483. Cys483 is a binding site for siroheme.

It belongs to the nitrite and sulfite reductase 4Fe-4S domain family. Alpha(8)-beta(8). The alpha component is a flavoprotein, the beta component is a hemoprotein. Siroheme serves as cofactor. Requires [4Fe-4S] cluster as cofactor.

It carries out the reaction hydrogen sulfide + 3 NADP(+) + 3 H2O = sulfite + 3 NADPH + 4 H(+). The protein operates within sulfur metabolism; hydrogen sulfide biosynthesis; hydrogen sulfide from sulfite (NADPH route): step 1/1. Functionally, component of the sulfite reductase complex that catalyzes the 6-electron reduction of sulfite to sulfide. This is one of several activities required for the biosynthesis of L-cysteine from sulfate. The chain is Sulfite reductase [NADPH] hemoprotein beta-component from Zymomonas mobilis subsp. mobilis (strain ATCC 31821 / ZM4 / CP4).